We begin with the raw amino-acid sequence, 355 residues long: Heat-inducible transcription repressor HrcA (355 aa).

This sequence belongs to the HrcA family.

Its function is as follows. Negative regulator of class I heat shock genes (grpE-dnaK-dnaJ and groELS operons). Prevents heat-shock induction of these operons. The polypeptide is Heat-inducible transcription repressor HrcA (Nitratidesulfovibrio vulgaris (strain ATCC 29579 / DSM 644 / CCUG 34227 / NCIMB 8303 / VKM B-1760 / Hildenborough) (Desulfovibrio vulgaris)).